Reading from the N-terminus, the 80-residue chain is Acyl carrier protein (80 aa).

The Carrier domain maps to 4–79 (EAILEKVRSI…DAVKYIEEKQ (76 aa)). An O-(pantetheine 4'-phosphoryl)serine modification is found at S39.

Belongs to the acyl carrier protein (ACP) family. In terms of processing, 4'-phosphopantetheine is transferred from CoA to a specific serine of apo-ACP by AcpS. This modification is essential for activity because fatty acids are bound in thioester linkage to the sulfhydryl of the prosthetic group.

It is found in the cytoplasm. The protein operates within lipid metabolism; fatty acid biosynthesis. In terms of biological role, carrier of the growing fatty acid chain in fatty acid biosynthesis. The polypeptide is Acyl carrier protein (Prochlorococcus marinus (strain NATL1A)).